Consider the following 195-residue polypeptide: Protein GrpE (195 aa).

Basic and acidic residues predominate over residues 1–20 (MSSKEQKTPDEQVLDQKEAA). Positions 1–40 (MSSKEQKTPDEQVLDQKEAAKGQQADAAPETADVADPRDA) are disordered.

Belongs to the GrpE family. As to quaternary structure, homodimer.

The protein localises to the cytoplasm. Functionally, participates actively in the response to hyperosmotic and heat shock by preventing the aggregation of stress-denatured proteins, in association with DnaK and GrpE. It is the nucleotide exchange factor for DnaK and may function as a thermosensor. Unfolded proteins bind initially to DnaJ; upon interaction with the DnaJ-bound protein, DnaK hydrolyzes its bound ATP, resulting in the formation of a stable complex. GrpE releases ADP from DnaK; ATP binding to DnaK triggers the release of the substrate protein, thus completing the reaction cycle. Several rounds of ATP-dependent interactions between DnaJ, DnaK and GrpE are required for fully efficient folding. This is Protein GrpE from Pectobacterium carotovorum subsp. carotovorum (strain PC1).